Here is a 375-residue protein sequence, read N- to C-terminus: Probable trehalose-phosphate phosphatase 7 (375 aa).

Belongs to the trehalose phosphatase family. The cofactor is a divalent metal cation.

It carries out the reaction alpha,alpha-trehalose 6-phosphate + H2O = alpha,alpha-trehalose + phosphate. It participates in glycan biosynthesis; trehalose biosynthesis. Its function is as follows. Removes the phosphate from trehalose 6-phosphate to produce free trehalose. Trehalose accumulation in plant may improve abiotic stress tolerance. This chain is Probable trehalose-phosphate phosphatase 7 (TPP7), found in Oryza sativa subsp. japonica (Rice).